Consider the following 150-residue polypeptide: Large ribosomal subunit protein bL9 (150 aa).

The protein belongs to the bacterial ribosomal protein bL9 family.

In terms of biological role, binds to the 23S rRNA. In Latilactobacillus sakei subsp. sakei (strain 23K) (Lactobacillus sakei subsp. sakei), this protein is Large ribosomal subunit protein bL9.